The primary structure comprises 211 residues: 7-carboxy-7-deazaguanine synthase (211 aa).

Residues 22 to 24 (LQG) and R37 each bind substrate. Residues 28–211 (NTGMPSVFVR…LQTHKLIGIE (184 aa)) enclose the Radical SAM core domain. 3 residues coordinate [4Fe-4S] cluster: C41, C45, and C48. T50 contributes to the Mg(2+) binding site. Position 78 (T78) interacts with substrate. S-adenosyl-L-methionine-binding positions include G80 and 122–124 (SPK).

It belongs to the radical SAM superfamily. 7-carboxy-7-deazaguanine synthase family. As to quaternary structure, homodimer. The cofactor is [4Fe-4S] cluster. S-adenosyl-L-methionine serves as cofactor. It depends on Mg(2+) as a cofactor.

The catalysed reaction is 6-carboxy-5,6,7,8-tetrahydropterin + H(+) = 7-carboxy-7-deazaguanine + NH4(+). The protein operates within purine metabolism; 7-cyano-7-deazaguanine biosynthesis. Its function is as follows. Catalyzes the complex heterocyclic radical-mediated conversion of 6-carboxy-5,6,7,8-tetrahydropterin (CPH4) to 7-carboxy-7-deazaguanine (CDG), a step common to the biosynthetic pathways of all 7-deazapurine-containing compounds. In Haemophilus influenzae (strain ATCC 51907 / DSM 11121 / KW20 / Rd), this protein is 7-carboxy-7-deazaguanine synthase.